The sequence spans 128 residues: Sm-like protein LSM1A (128 aa).

In terms of domain architecture, Sm spans 10-85 (FFSTSLAAYL…VVLIGELDVE (76 aa)).

Belongs to the snRNP Sm proteins family. Component of the heptameric LSM1-LSM7 complex that forms a seven-membered ring structure with a donut shape. The LSM subunits are arranged in the order LSM1, LSM2, LSM3, LSM6, LSM5, LSM7 and LSM4. LSM1A subunit interacts only with its two neighboring subunits, LSM2 and LSM4. In terms of tissue distribution, expressed in roots, leaves, stems, flowers and siliques.

The protein resides in the cytoplasm. It is found in the P-body. Its function is as follows. Component of the cytoplasmic LSM1-LSM7 complex which is involved in mRNA degradation by promoting decapping and leading to accurate 5'-3' mRNA decay. LSM1A and LSM1B are essential for the formation of the cytoplasmic LSM1-LSM7 complex which regulates developmental gene expression by the decapping of specific development-related transcripts. Required for P-body formation during heat stress. This Arabidopsis thaliana (Mouse-ear cress) protein is Sm-like protein LSM1A.